Consider the following 185-residue polypeptide: MVSSFRVQQAAREIRAGAVIAYPTEAVWGLGCDPWNEDAVYRLLALKSRPVDKGLILIADNIRQFDFLFEDFPEDWIDRMSSTWPGPNTWLVPHQDLLPEWVTGQHDTVALRVSDHPVVRELCALVGPLISTSCNPGGRPAAKTRLRVEQYFHGQLDLVLGGALGGRKNPSVIRDLATGEVVRPG.

Residues 4-185 enclose the YrdC-like domain; the sequence is SFRVQQAARE…LATGEVVRPG (182 aa).

This sequence belongs to the SUA5 family. TsaC subfamily.

The protein localises to the cytoplasm. The catalysed reaction is L-threonine + hydrogencarbonate + ATP = L-threonylcarbamoyladenylate + diphosphate + H2O. Required for the formation of a threonylcarbamoyl group on adenosine at position 37 (t(6)A37) in tRNAs that read codons beginning with adenine. Catalyzes the conversion of L-threonine, HCO(3)(-)/CO(2) and ATP to give threonylcarbamoyl-AMP (TC-AMP) as the acyladenylate intermediate, with the release of diphosphate. The protein is Threonylcarbamoyl-AMP synthase of Pseudomonas putida (strain ATCC 47054 / DSM 6125 / CFBP 8728 / NCIMB 11950 / KT2440).